Here is a 304-residue protein sequence, read N- to C-terminus: Glutaminase (304 aa).

7 residues coordinate substrate: Ser63, Asn113, Glu157, Asn164, Tyr188, Tyr240, and Val258.

The protein belongs to the glutaminase family. As to quaternary structure, homotetramer.

The enzyme catalyses L-glutamine + H2O = L-glutamate + NH4(+). This Paraburkholderia phytofirmans (strain DSM 17436 / LMG 22146 / PsJN) (Burkholderia phytofirmans) protein is Glutaminase.